The chain runs to 116 residues: Aspartate 1-decarboxylase (116 aa).

Ser25 serves as the catalytic Schiff-base intermediate with substrate; via pyruvic acid. Pyruvic acid (Ser) is present on Ser25. Residue Thr57 coordinates substrate. Tyr58 acts as the Proton donor in catalysis. 73–75 contributes to the substrate binding site; it reads GAA.

It belongs to the PanD family. As to quaternary structure, heterooctamer of four alpha and four beta subunits. Pyruvate is required as a cofactor. Is synthesized initially as an inactive proenzyme, which is activated by self-cleavage at a specific serine bond to produce a beta-subunit with a hydroxyl group at its C-terminus and an alpha-subunit with a pyruvoyl group at its N-terminus.

It localises to the cytoplasm. The enzyme catalyses L-aspartate + H(+) = beta-alanine + CO2. The protein operates within cofactor biosynthesis; (R)-pantothenate biosynthesis; beta-alanine from L-aspartate: step 1/1. Functionally, catalyzes the pyruvoyl-dependent decarboxylation of aspartate to produce beta-alanine. This Leptospira interrogans serogroup Icterohaemorrhagiae serovar Lai (strain 56601) protein is Aspartate 1-decarboxylase.